The primary structure comprises 156 residues: Glutamate-rich protein 2 (156 aa).

Disordered regions lie at residues 29–66 (LQDIDDKLSESAEDDGEDDTNDEDDDEDSNPKKNTQAP) and 116–156 (EKTQ…EDGS). Composition is skewed to acidic residues over residues 39 to 56 (SAEDDGEDDTNDEDDDED) and 140 to 156 (SDEELSDESSDEGEDGS).

This chain is Glutamate-rich protein 2 (ERICH2), found in Homo sapiens (Human).